Consider the following 188-residue polypeptide: Ribosome-recycling factor (188 aa).

It belongs to the RRF family.

It localises to the cytoplasm. In terms of biological role, responsible for the release of ribosomes from messenger RNA at the termination of protein biosynthesis. May increase the efficiency of translation by recycling ribosomes from one round of translation to another. This is Ribosome-recycling factor from Gluconacetobacter diazotrophicus (strain ATCC 49037 / DSM 5601 / CCUG 37298 / CIP 103539 / LMG 7603 / PAl5).